Reading from the N-terminus, the 689-residue chain is MQNIDLISEKEAQKLLEELADKIAAYNHAYYIEDNPLVSDSEYDQLFNTNLKLEQKFPHLILENSPSKKVGAKIANKFAKVTHQVPMLSLSNAFDEQDVRDFVDRIKNFLRLNEFAPIFCEPKIDGLSFSAVYKNGVLTTGATRGDGYVGEDITANIKTIKNFPHKIDNVPEFLEVRGEIYIEKQDFLNLNKEQEEQGKDKFANPRNAAAGSLRQLDASITAKRPLKYFVYSGGVTEQNLASSQDQLLTKLKECGFNINEISKLASSEEEIFAFYEYLKTNREDLPYEIDGVVYKLNDFALQNRMGFIARSPRFATAHKFPAIIGQTQLLSITVQVGRTGTLTPVAELEPIEIGGVTVSRATLHNFQEIARKDVRIKDYVFLQRAGDVIPKIMGVDFDKRPNDTATFDTPLFCLSCNSKLHYMPEDIIIRCDNGLNCPAQNYERIRHFVSKNAMDIEGLGRKQVEFLIDKGLISNPLDIFFLKEKNDSSLAKLENMDGWGKKSVENLFKNIEKSKNVSLPRFIYALGIRHIGEQNAKLLAREVGSYNNFIAQMELLRTNEPDIYQKLNNLEGIGDKILVDIIDFFDVKENIELIKKLGEILNIEDYKETREQSSLTDKIVVFTGSLPTISRAEAKATAEKLGAKVTAGVSSNTDLVVAGVDAGSKLKKAKELNIKIIDEEEWLTLIKNV.

Residues 40–44 (DSEYD), 89–90 (SL), and Glu121 each bind NAD(+). The N6-AMP-lysine intermediate role is filled by Lys123. Residues Arg144, Glu179, Lys295, and Lys319 each contribute to the NAD(+) site. 4 residues coordinate Zn(2+): Cys413, Cys416, Cys431, and Cys437. Residues 610–689 (REQSSLTDKI…EEWLTLIKNV (80 aa)) form the BRCT domain.

This sequence belongs to the NAD-dependent DNA ligase family. LigA subfamily. Requires Mg(2+) as cofactor. The cofactor is Mn(2+).

It catalyses the reaction NAD(+) + (deoxyribonucleotide)n-3'-hydroxyl + 5'-phospho-(deoxyribonucleotide)m = (deoxyribonucleotide)n+m + AMP + beta-nicotinamide D-nucleotide.. Functionally, DNA ligase that catalyzes the formation of phosphodiester linkages between 5'-phosphoryl and 3'-hydroxyl groups in double-stranded DNA using NAD as a coenzyme and as the energy source for the reaction. It is essential for DNA replication and repair of damaged DNA. The chain is DNA ligase from Rickettsia massiliae (strain Mtu5).